Reading from the N-terminus, the 312-residue chain is Phosphoribosylaminoimidazole-succinocarboxamide synthase (312 aa).

It belongs to the SAICAR synthetase family.

The enzyme catalyses 5-amino-1-(5-phospho-D-ribosyl)imidazole-4-carboxylate + L-aspartate + ATP = (2S)-2-[5-amino-1-(5-phospho-beta-D-ribosyl)imidazole-4-carboxamido]succinate + ADP + phosphate + 2 H(+). It participates in purine metabolism; IMP biosynthesis via de novo pathway; 5-amino-1-(5-phospho-D-ribosyl)imidazole-4-carboxamide from 5-amino-1-(5-phospho-D-ribosyl)imidazole-4-carboxylate: step 1/2. The polypeptide is Phosphoribosylaminoimidazole-succinocarboxamide synthase (Legionella pneumophila (strain Paris)).